A 251-amino-acid chain; its full sequence is Sugar fermentation stimulation protein homolog (251 aa).

Belongs to the SfsA family.

This chain is Sugar fermentation stimulation protein homolog, found in Prochlorococcus marinus (strain SARG / CCMP1375 / SS120).